The chain runs to 1025 residues: Dihydropyrimidine dehydrogenase [NADP(+)] (1025 aa).

Residues 69–100 form the 4Fe-4S ferredoxin-type 1 domain; it reads ERGALREAMRCLKCADAPCQKSCPTNLDIKSF. Residues C79, C82, C87, and C91 each contribute to the [4Fe-4S] cluster site. FAD is bound at residue V129. The [4Fe-4S] cluster site is built by C130, C136, C140, and Q156. Residues 194–198, 218–226, R235, and L261 each bind FAD; these read GAGPA and EKQEYVGGI. Residues 340 to 343, 364 to 365, and R371 contribute to the NADP(+) site; these read AGDT and RK. Residue K384 is modified to N6-acetyllysine. Residues 437 to 439 and 481 to 487 each bind NADP(+); these read AFG and DVVGIAN. Position 480–489 (480–489) interacts with FAD; that stretch reads GDVVGIANTT. FMN-binding positions include S550 and 574–575; that span reads KT. Residues N609 and 668-670 contribute to the substrate site; that span reads NLS. The active-site Proton acceptor is the C671. K709 is a binding site for FMN. 736 to 737 contacts substrate; that stretch reads NT. FMN contacts are provided by residues G767, 793–795, and 816–817; these read TGG and CS. 4Fe-4S ferredoxin-type domains follow at residues 944–976 and 978–1007; these read VVAVIDEEMCINCGKCYMTCNDSGYQAIQFDPE and HLPTVTDTCTGCTLCLSVCPIIDCIKMVSR. [4Fe-4S] cluster-binding residues include C953, C956, C959, C963, C986, C989, C992, and C996.

It belongs to the dihydropyrimidine dehydrogenase family. As to quaternary structure, homodimer. The cofactor is FAD. FMN is required as a cofactor. It depends on [4Fe-4S] cluster as a cofactor.

It localises to the cytoplasm. It catalyses the reaction 5,6-dihydrouracil + NADP(+) = uracil + NADPH + H(+). It carries out the reaction 5,6-dihydrothymine + NADP(+) = thymine + NADPH + H(+). Its pathway is amino-acid biosynthesis; beta-alanine biosynthesis. Its activity is regulated as follows. Inactivated by 5-iodouracil. In terms of biological role, involved in pyrimidine base degradation. Catalyzes the reduction of uracil and thymine. Also involved the degradation of the chemotherapeutic drug 5-fluorouracil. This Bos taurus (Bovine) protein is Dihydropyrimidine dehydrogenase [NADP(+)] (DPYD).